A 431-amino-acid polypeptide reads, in one-letter code: Inactive polypeptide N-acetylgalactosaminyltransferase-like protein 5 (431 aa).

Topologically, residues 1-4 (MKSV) are cytoplasmic. A helical; Signal-anchor for type II membrane protein transmembrane segment spans residues 5 to 27 (IIQGLFCGFLAIGLWASMLLLFL). The Lumenal segment spans residues 28 to 431 (HLEQEDMLEN…TERKRKKNRF (404 aa)). Asparagine 68 is a glycosylation site (N-linked (GlcNAc...) asparagine). Disulfide bonds link cysteine 105–cysteine 336 and cysteine 327–cysteine 403. The tract at residues 114–224 (LPTASIIICF…RVWLEPLLHA (111 aa)) is catalytic subdomain A. The interval 282–344 (PIRSPAMTGG…PCSRVGYNSK (63 aa)) is catalytic subdomain B. Asparagine 353 and asparagine 390 each carry an N-linked (GlcNAc...) asparagine glycan.

This sequence belongs to the glycosyltransferase 2 family. GalNAc-T subfamily. It depends on Mn(2+) as a cofactor. In terms of tissue distribution, expressed in testis. Mainly expressed in the round and elongated spermatids during spermiogenesis, not in the outermost cells of the seminiferous tubules, which contain spermatogonia and somatic Sertoli cells. Present in the juxtanuclear space in the round spermatids, not in the acrosomal vesicles. In the elongating spermatids, localizes strongly in the acroplaxome, the region between the developing acrosome and nucleus. During differentiation, also weakly detected in the transient manchette containing microtubules. In epididymal spermatozoa, weakly detected in the midpiece, but concentrates mainly in the neck region around the head-tail coupling apparatus (at protein level).

It is found in the late endosome membrane. Probable inactive glycosyltransferase required during spermatid development. May participate in protein loading into the acrosomes and accumulation of ubiquitin-proteasome systems around the head-tail coupling apparatus region. This is Inactive polypeptide N-acetylgalactosaminyltransferase-like protein 5 (Galntl5) from Mus musculus (Mouse).